Reading from the N-terminus, the 162-residue chain is Succinate dehydrogenase assembly factor 2-A, mitochondrial (162 aa).

Residues Met-1 to Met-23 constitute a mitochondrion transit peptide.

It belongs to the SDHAF2 family. In terms of assembly, interacts with the flavoprotein subunit within the SDH catalytic dimer.

Its subcellular location is the mitochondrion matrix. Plays an essential role in the assembly of succinate dehydrogenase (SDH), an enzyme complex (also referred to as respiratory complex II) that is a component of both the tricarboxylic acid (TCA) cycle and the mitochondrial electron transport chain, and which couples the oxidation of succinate to fumarate with the reduction of ubiquinone (coenzyme Q) to ubiquinol. Required for flavinylation (covalent attachment of FAD) of the flavoprotein subunit of the SDH catalytic dimer. This Drosophila erecta (Fruit fly) protein is Succinate dehydrogenase assembly factor 2-A, mitochondrial.